A 375-amino-acid polypeptide reads, in one-letter code: Cell division protein ZapE (375 aa).

78–85 is an ATP binding site; sequence GGVGRGKT.

The protein belongs to the AFG1 ATPase family. ZapE subfamily. As to quaternary structure, interacts with FtsZ.

Its subcellular location is the cytoplasm. Its function is as follows. Reduces the stability of FtsZ polymers in the presence of ATP. The chain is Cell division protein ZapE from Escherichia coli O157:H7.